Here is a 328-residue protein sequence, read N- to C-terminus: Phosphate acyltransferase (328 aa).

It belongs to the PlsX family. Homodimer. Probably interacts with PlsY.

It localises to the cytoplasm. It carries out the reaction a fatty acyl-[ACP] + phosphate = an acyl phosphate + holo-[ACP]. It participates in lipid metabolism; phospholipid metabolism. Functionally, catalyzes the reversible formation of acyl-phosphate (acyl-PO(4)) from acyl-[acyl-carrier-protein] (acyl-ACP). This enzyme utilizes acyl-ACP as fatty acyl donor, but not acyl-CoA. The sequence is that of Phosphate acyltransferase from Staphylococcus aureus (strain bovine RF122 / ET3-1).